The chain runs to 1183 residues: DNA-directed RNA polymerase subunit beta' (1183 aa).

Residues cysteine 60, cysteine 62, cysteine 75, and cysteine 78 each contribute to the Zn(2+) site. Residues aspartate 449, aspartate 451, and aspartate 453 each coordinate Mg(2+). Zn(2+)-binding residues include cysteine 794, cysteine 867, cysteine 874, and cysteine 877.

The protein belongs to the RNA polymerase beta' chain family. In terms of assembly, the RNAP catalytic core consists of 2 alpha, 1 beta, 1 beta' and 1 omega subunit. When a sigma factor is associated with the core the holoenzyme is formed, which can initiate transcription. Requires Mg(2+) as cofactor. It depends on Zn(2+) as a cofactor.

The catalysed reaction is RNA(n) + a ribonucleoside 5'-triphosphate = RNA(n+1) + diphosphate. In terms of biological role, DNA-dependent RNA polymerase catalyzes the transcription of DNA into RNA using the four ribonucleoside triphosphates as substrates. This Caldanaerobacter subterraneus subsp. tengcongensis (strain DSM 15242 / JCM 11007 / NBRC 100824 / MB4) (Thermoanaerobacter tengcongensis) protein is DNA-directed RNA polymerase subunit beta'.